The sequence spans 981 residues: MALFRIYSFLAPFHILVLCQALRNYPDNEVTLLDSMSAPGDLGWEAYPSEGWEEISVMDERNIPMRTYQVCNVMEANQNNWLRTGLIQREGAQRVYVEIKFTLRDCNSLPGVPGTCKETFNVYYHESNNAVAAPLRHIRESQYIKIDTIAADESFTQTDVGDRVMKLNTEVRDISGLSKRGLYLAFQDLGACIALVSVRVFYKRCPLAVLNLARFPDTVTGGDSALVEVRGTCVEDAEELEGPRMFCSADGGWLVPIGRCVCRPGFEEVDGHCQPCRSGFYKASAMDAYCVKCPPHSYSHQDKASECVCERGFYRAESDPRSMACTRPPSAPGNPISMVNETAVTLEWSPPRDSGGRGDVSYSVHCRKCSGETGASERCVPCGSGAHFNPRQFGLTHPRVLVTELQPHTNYTFSVEALNGVSDLSPSPRQLVSVNVTTSQTVSVILKERKGTDSVTLAWQGPEPVDGTVVEYEVTYYEKNQQDQNYTVLKTKSNSMTVDGLKPGTTYIFRVRARTDGGYGNYKGEIELETSHEDMLAVGDPNQQTILAISVAGGAVLLVLLVACFIVSGRRCGYIKAKQDPEEEKMQFQHGRVKLPETRTYIHPHTYEDPNQAVRDFAKEIEVSNIRIERVIGAGEFGEVCSGRLRLPSKREIQVAIKSLKAGYSEHQRRDFLSEASIMGQFDHPNIIRLEGVVTRCKPVMIVTEYMENGSLDTFLKKHDGQFTVIQLLGMLRGIAAGMQYLSEMNYVHRDLAARNILVNRNLVCKVSDFGLSRVLEDDPEAAYTTRGGKIPIRWTAPEAITYRKFTSASDVWSYGIVMWEVISYGERPYWEMSNQDVIKAVDEGYRLPAPMDCPVVLHQLMLDCWEKNRSDRPKFGQIVNTLDRLIRNPSSLKQLANSAVWEDPVTPEAAVNTVEDWLDLIKMGQYKEHFSSAGYVTLDSVLYVSSSELDKMGVELAGHQKKILSSIQCLQAHHGTQVQV.

Residues 1–20 (MALFRIYSFLAPFHILVLCQ) form the signal peptide. At 21–545 (ALRNYPDNEV…LAVGDPNQQT (525 aa)) the chain is on the extracellular side. The Eph LBD domain occupies 29–210 (EVTLLDSMSA…FYKRCPLAVL (182 aa)). Fibronectin type-III domains follow at residues 328–441 (PPSA…TSQT) and 442–533 (VSVI…TSHE). N-linked (GlcNAc...) asparagine glycans are attached at residues N340, N410, N435, and N485. A helical membrane pass occupies residues 546–566 (ILAISVAGGAVLLVLLVACFI). At 567-981 (VSGRRCGYIK…QAHHGTQVQV (415 aa)) the chain is on the cytoplasmic side. Phosphotyrosine; by autocatalysis occurs at positions 601 and 607. Residues 626–887 (IRIERVIGAG…QIVNTLDRLI (262 aa)) enclose the Protein kinase domain. ATP contacts are provided by residues 633–638 (GAGEFG), K658, and 705–711 (EYMENGS). Position 706 is a phosphotyrosine; by autocatalysis (Y706). D751 acts as the Proton acceptor in catalysis. 755–756 (RN) is a binding site for ATP. Y784 and Y927 each carry phosphotyrosine; by autocatalysis. Positions 910–974 (AAVNTVEDWL…LSSIQCLQAH (65 aa)) constitute an SAM domain. The short motif at 979–981 (VQV) is the PDZ-binding element.

This sequence belongs to the protein kinase superfamily. Tyr protein kinase family. Ephrin receptor subfamily. As to quaternary structure, heterotetramer upon binding of the ligand. The heterotetramer is composed of an ephrin dimer and a receptor dimer. Oligomerization is probably required to induce biological responses. Post-translationally, autophosphorylates upon activation by efna5. In terms of tissue distribution, widely expressed in the developing zebrafish nervous system.

It localises to the cell membrane. The enzyme catalyses L-tyrosyl-[protein] + ATP = O-phospho-L-tyrosyl-[protein] + ADP + H(+). In terms of biological role, receptor tyrosine kinase which binds promiscuously membrane-bound ephrin family ligands residing on adjacent cells, leading to contact-dependent bidirectional signaling into neighboring cells. The signaling pathway downstream of the receptor is referred to as forward signaling while the signaling pathway downstream of the ephrin ligand is referred to as reverse signaling. Highly promiscuous for ephrin-A ligands it binds preferentially efna5. Upon activation by efna5 regulates cell-cell adhesion, cytoskeletal organization and cell migration. Plays a role in cardiac cells migration and differentiation probably through activation by efna1. Involved in the retinotectal mapping of neurons. May also control the segregation but not the guidance of motor and sensory axons during neuromuscular circuit development. This is Ephrin type-A receptor 3 (epha3) from Danio rerio (Zebrafish).